We begin with the raw amino-acid sequence, 257 residues long: Imidazole glycerol phosphate synthase subunit HisF (257 aa).

Residues D11 and D130 contribute to the active site.

The protein belongs to the HisA/HisF family. In terms of assembly, heterodimer of HisH and HisF.

Its subcellular location is the cytoplasm. The enzyme catalyses 5-[(5-phospho-1-deoxy-D-ribulos-1-ylimino)methylamino]-1-(5-phospho-beta-D-ribosyl)imidazole-4-carboxamide + L-glutamine = D-erythro-1-(imidazol-4-yl)glycerol 3-phosphate + 5-amino-1-(5-phospho-beta-D-ribosyl)imidazole-4-carboxamide + L-glutamate + H(+). It participates in amino-acid biosynthesis; L-histidine biosynthesis; L-histidine from 5-phospho-alpha-D-ribose 1-diphosphate: step 5/9. Its function is as follows. IGPS catalyzes the conversion of PRFAR and glutamine to IGP, AICAR and glutamate. The HisF subunit catalyzes the cyclization activity that produces IGP and AICAR from PRFAR using the ammonia provided by the HisH subunit. This is Imidazole glycerol phosphate synthase subunit HisF from Prochlorococcus marinus (strain SARG / CCMP1375 / SS120).